Here is a 563-residue protein sequence, read N- to C-terminus: Tripeptidyl-peptidase 1 (563 aa).

Residues 1–19 (MRLRTCLLGLLALCVASKC) form the signal peptide. The propeptide at 20 to 195 (SYSPEPDQQR…PEPQVSGTVG (176 aa)) is removed in mature form. C111 and C122 form a disulfide bridge. The region spanning 199–563 (GVTPSVIRQR…PALLKALIKP (365 aa)) is the Peptidase S53 domain. Residues N210 and N222 are each glycosylated (N-linked (GlcNAc...) asparagine). Catalysis depends on charge relay system residues E272 and D276. N286, N313, and N443 each carry an N-linked (GlcNAc...) asparagine glycan. Disulfide bonds link C365/C526 and C522/C537. Residue S475 is the Charge relay system of the active site. Ca(2+) is bound by residues D517 and V518. Ca(2+)-binding residues include G539, G541, and D543.

As to quaternary structure, monomer. Interacts with CLN5. Interacts with CLN3. It depends on Ca(2+) as a cofactor. Post-translationally, activated by autocatalytic proteolytical processing upon acidification. N-glycosylation is required for processing and activity.

It is found in the lysosome. Its subcellular location is the melanosome. The catalysed reaction is Release of an N-terminal tripeptide from a polypeptide, but also has endopeptidase activity.. Functionally, lysosomal serine protease with tripeptidyl-peptidase I activity. May act as a non-specific lysosomal peptidase which generates tripeptides from the breakdown products produced by lysosomal proteinases. Requires substrates with an unsubstituted N-terminus. The sequence is that of Tripeptidyl-peptidase 1 (TPP1) from Canis lupus familiaris (Dog).